The following is a 1642-amino-acid chain: Cholesterol transporter ABCA5 (1642 aa).

The chain crosses the membrane as a helical span at residues 32 to 52 (SVQEILFPLFFLFWLILISMM). N-linked (GlcNAc...) asparagine glycosylation is present at Asn-86. 6 helical membrane-spanning segments follow: residues 220–240 (VILI…AIHI), 264–284 (LSWV…MAVI), 297–317 (IVIF…ALML), 328–348 (GIVE…IILI), 355–375 (LVWL…AQVM), and 396–416 (LIIT…LAVY). The N-linked (GlcNAc...) asparagine glycan is linked to Asn-458. One can recognise an ABC transporter 1 domain in the interval 478–713 (IRISGIQKTY…WGIGYRLSMY (236 aa)). Residue 514-521 (GHSGTGKS) participates in ATP binding. A run of 2 helical transmembrane segments spans residues 866–886 (LLLL…HHSF) and 967–987 (VFAA…VNII). N-linked (GlcNAc...) asparagine glycosylation occurs at Asn-996. Helical transmembrane passes span 1021–1041 (LYFQ…YFAM), 1071–1091 (VVDI…LLAF), 1102–1122 (FLAV…FTYI), 1139–1159 (FIYS…FFMG), 1169–1189 (AFCI…FIKI), and 1207–1227 (LSVA…LLQY). The tract at residues 1249 to 1268 (KSKNRKLPEPPDNEDEDEDV) is disordered. Residues 1259 to 1268 (PDNEDEDEDV) are compositionally biased toward acidic residues. The 244-residue stretch at 1290 to 1533 (IMVSNLHKEY…FGKGYFLEIK (244 aa)) folds into the ABC transporter 2 domain. 1333-1340 (GPNGAGKS) is a binding site for ATP.

It belongs to the ABC transporter superfamily. ABCA family. In terms of processing, N-glycosylated. In terms of tissue distribution, ubiquitously expressed. Highly expressed in testis, skeletal muscle, kidney, liver and placenta. Expressed in both the epithelial and mesenchymal compartments, present within the outer root sheath (ORS) of the hair follicle as well as dermal sheath. Expressed in multiple regions of the brain, including the hippocampus, superior frontal and inferior temporal cortices. Strongly expressed in neurons and moderately in microglia, with only weak expression in astrocytes and oligodendrocytes.

Its subcellular location is the golgi apparatus membrane. It is found in the lysosome membrane. It localises to the late endosome membrane. The protein resides in the cell membrane. It catalyses the reaction cholesterol(in) + ATP + H2O = cholesterol(out) + ADP + phosphate + H(+). Functionally, cholesterol efflux transporter in macrophages that is responsible for APOAI/high-density lipoproteins (HDL) formation at the plasma membrane under high cholesterol levels and participates in reverse cholesterol transport. May play a role in the processing of autolysosomes. This Homo sapiens (Human) protein is Cholesterol transporter ABCA5.